The primary structure comprises 383 residues: ATP phosphoribosyltransferase regulatory subunit (383 aa).

Belongs to the class-II aminoacyl-tRNA synthetase family. HisZ subfamily. In terms of assembly, heteromultimer composed of HisG and HisZ subunits.

It localises to the cytoplasm. It participates in amino-acid biosynthesis; L-histidine biosynthesis; L-histidine from 5-phospho-alpha-D-ribose 1-diphosphate: step 1/9. Required for the first step of histidine biosynthesis. May allow the feedback regulation of ATP phosphoribosyltransferase activity by histidine. The protein is ATP phosphoribosyltransferase regulatory subunit of Neisseria gonorrhoeae (strain ATCC 700825 / FA 1090).